The primary structure comprises 347 residues: Probable arabinogalactan endo-beta-1,4-galactanase A (347 aa).

The N-terminal stretch at 1–16 (MLFSYLLATLPLLANA) is a signal peptide. E150 (proton donor) is an active-site residue. The active-site Nucleophile is E260.

Belongs to the glycosyl hydrolase 53 family.

It is found in the secreted. The catalysed reaction is The enzyme specifically hydrolyzes (1-&gt;4)-beta-D-galactosidic linkages in type I arabinogalactans.. Functionally, endogalactanase involved in the degradation of plant cell wall polysaccharides, and more particularly of hairy regions of pectin. This Aspergillus oryzae (strain ATCC 42149 / RIB 40) (Yellow koji mold) protein is Probable arabinogalactan endo-beta-1,4-galactanase A (galA).